A 309-amino-acid chain; its full sequence is Taste receptor type 2 member 46 (309 aa).

Methionine 1 is a topological domain (extracellular). Residues 2-22 (ITFLPIIFSILIVVTFVIGNF) traverse the membrane as a helical segment. The Cytoplasmic portion of the chain corresponds to 23 to 46 (ANGFIALANSIEWFKRQKISFADQ). The chain crosses the membrane as a helical span at residues 47-67 (ILTALAVSRVGLLWVLLLNWY). At 68–86 (ATELNPAFYSIEVRITAYN) the chain is on the extracellular side. A helical membrane pass occupies residues 87–107 (LWAVINHFSNWLATSLSIFYL). Residues 108–126 (LKIANFSNLIFLCLKRRVK) are Cytoplasmic-facing. Residues 127–147 (SVVLVILLGPLLFLVCHLFVI) traverse the membrane as a helical segment. At 148 to 178 (NMNQIIWTKEYEGNMTWKIKLRSAMYLSNTT) the chain is on the extracellular side. 2 N-linked (GlcNAc...) asparagine glycosylation sites follow: asparagine 161 and asparagine 176. A helical transmembrane segment spans residues 179-199 (VTILANLVPFTLTLISFLLLI). Over 200–229 (CSLCKHLEKMQLHGKGSQDPSMKVHIKALQ) the chain is Cytoplasmic. A helical transmembrane segment spans residues 230–250 (TVTSFLLLCAIYFLSIIMSVW). The Extracellular portion of the chain corresponds to 251-259 (SFESLENKP). The chain crosses the membrane as a helical span at residues 260–280 (VFMFCEAITFSYPSTHPFILI). Topologically, residues 281 to 309 (WGNKKLKQTFLSVLWHVRYWVKGEKPSXP) are cytoplasmic.

It belongs to the G-protein coupled receptor T2R family.

The protein resides in the membrane. Its subcellular location is the cell projection. It is found in the cilium membrane. In terms of biological role, receptor that may play a role in the perception of bitterness and is gustducin-linked. May play a role in sensing the chemical composition of the gastrointestinal content. The activity of this receptor may stimulate alpha gustducin, mediate PLC-beta-2 activation and lead to the gating of TRPM5. In airway epithelial cells, binding of bitter compounds increases the intracellular calcium ion concentration and stimulates ciliary beat frequency. The chain is Taste receptor type 2 member 46 (TAS2R46) from Pan troglodytes (Chimpanzee).